The sequence spans 55 residues: UPF0434 protein Erum1340/ERWE_CDS_01300 (55 aa).

This sequence belongs to the UPF0434 family.

This chain is UPF0434 protein Erum1340/ERWE_CDS_01300, found in Ehrlichia ruminantium (strain Welgevonden).